Reading from the N-terminus, the 769-residue chain is MQENYGASNIKVLKGLEAVRKRPGMYIGDTNIGGLHHMIYEVVDNSIDEAMAGHCDTIDVEITTEGSCIVSDNGRGIPVDMHPTENMPTLTVVLTVLHAGGKFDKDTYKVSGGLHGVGVSVVNALSKKLVATVERNGEIYRQEFSEGKVISEFGVIGKSKKTGTTIEFWPDDQIFEVTEFDYEILAKRFRELAYLNPKITINFKDNRVGKHESFHFEGGISQFVTDLNKKEALTKAIFFSVDEEDVNVEVALLYNDTYSENLLSFVNNIKTPDGGTHEAGFRMGLTRVISNYIEANASAREKDNKITGDDVREGLIAIVSVKVPEPQFEGQTKGKLGSTYVRPIVSKASFEYLTKYFEENPIEAKAIMNKALMAARGREAAKKARELTRKKESLSVGTLPGKLADCQSKDPSESEIYLVEGDSAGGSAKQGRERSFQAILPLRGKILNVEKARLDKILKSEQIQNMITAFGCGIGEDFDLSKLRYHKIIIMTDADVDGSHIQTLLLTFFFRFMNELVANGHIYLAQPPLYLYKKAKKQIYLKDEKALSEYLIETGIEGLNYEGIGMNDLKDYLKIVAAYRAILKDLEKRFNVISVIRYMIENSNLVKGNNEELFSVIKQFLETQGHNILNHYINENEIRAFVQTQNGLEELVINEELFTHPLYEEASYIFDKIKDRSLEFDKDILEVLEDVETNAKKGATIQRYKGLGEMNPEQLWETTMDPSVRRLLKITIEDAQSANDTFNLFMGDEVEPRRDYIQAHAKDVKHLDV.

The region spanning 414–528 is the Toprim domain; sequence SEIYLVEGDS…NGHIYLAQPP (115 aa). Glutamate 420, aspartate 493, and aspartate 495 together coordinate Mg(2+).

Belongs to the type II topoisomerase GyrB family. In terms of assembly, heterotetramer, composed of two GyrA and two GyrB chains. In the heterotetramer, GyrA contains the active site tyrosine that forms a transient covalent intermediate with DNA, while GyrB binds cofactors and catalyzes ATP hydrolysis. Requires Mg(2+) as cofactor. Mn(2+) is required as a cofactor. Ca(2+) serves as cofactor.

The protein localises to the cytoplasm. It catalyses the reaction ATP-dependent breakage, passage and rejoining of double-stranded DNA.. In terms of biological role, a type II topoisomerase that negatively supercoils closed circular double-stranded (ds) DNA in an ATP-dependent manner to modulate DNA topology and maintain chromosomes in an underwound state. Negative supercoiling favors strand separation, and DNA replication, transcription, recombination and repair, all of which involve strand separation. Also able to catalyze the interconversion of other topological isomers of dsDNA rings, including catenanes and knotted rings. Type II topoisomerases break and join 2 DNA strands simultaneously in an ATP-dependent manner. This Campylobacter jejuni subsp. jejuni serotype O:2 (strain ATCC 700819 / NCTC 11168) protein is DNA gyrase subunit B.